Here is a 37-residue protein sequence, read N- to C-terminus: Potassium channel toxin alpha-KTx 4.3 (37 aa).

3 disulfide bridges follow: cysteine 7–cysteine 28, cysteine 13–cysteine 33, and cysteine 17–cysteine 35. The tract at residues 26-33 (GKCMNGKC) is interaction with Ca(2+)-activated K(+) channels.

In terms of tissue distribution, expressed by the venom gland.

The protein resides in the secreted. Blocks reversibly Shaker B potassium-channels. This Tityus discrepans (Venezuelan scorpion) protein is Potassium channel toxin alpha-KTx 4.3.